A 140-amino-acid chain; its full sequence is uncharacterized protein (140 aa).

The 129-residue stretch at R3–P131 folds into the VOC domain. The a divalent metal cation site is built by H6, E53, H77, and E127.

Belongs to the methylmalonyl-CoA epimerase family.

This is an uncharacterized protein from Bacillus subtilis (strain 168).